A 297-amino-acid polypeptide reads, in one-letter code: UDP-N-acetylenolpyruvoylglucosamine reductase (297 aa).

An FAD-binding PCMH-type domain is found at 26 to 191 (QTGGPAEYLA…IAATFALKAG (166 aa)). The active site involves R170. S220 serves as the catalytic Proton donor. Residue E290 is part of the active site.

It belongs to the MurB family. FAD is required as a cofactor.

Its subcellular location is the cytoplasm. The enzyme catalyses UDP-N-acetyl-alpha-D-muramate + NADP(+) = UDP-N-acetyl-3-O-(1-carboxyvinyl)-alpha-D-glucosamine + NADPH + H(+). The protein operates within cell wall biogenesis; peptidoglycan biosynthesis. In terms of biological role, cell wall formation. The chain is UDP-N-acetylenolpyruvoylglucosamine reductase from Lactobacillus delbrueckii subsp. bulgaricus (strain ATCC 11842 / DSM 20081 / BCRC 10696 / JCM 1002 / NBRC 13953 / NCIMB 11778 / NCTC 12712 / WDCM 00102 / Lb 14).